The primary structure comprises 251 residues: Flap endonuclease Xni (251 aa).

Mg(2+) is bound at residue Asp104. One can recognise a 5'-3' exonuclease domain in the interval 160–249 (VLPRQLPDYW…IDGNLQQLRL (90 aa)). 5 residues coordinate K(+): Leu171, Ala172, Pro180, Val182, and Ile185. The interaction with DNA stretch occupies residues 184-189 (GIGPKS).

Belongs to the Xni family. Requires Mg(2+) as cofactor. The cofactor is K(+).

In terms of biological role, has flap endonuclease activity. During DNA replication, flap endonucleases cleave the 5'-overhanging flap structure that is generated by displacement synthesis when DNA polymerase encounters the 5'-end of a downstream Okazaki fragment. This is Flap endonuclease Xni from Salmonella newport (strain SL254).